The sequence spans 332 residues: Anthranilate phosphoribosyltransferase (332 aa).

5-phospho-alpha-D-ribose 1-diphosphate contacts are provided by residues Gly-79, 82 to 83 (GD), Thr-87, 89 to 92 (NIST), 107 to 115 (KHGNRSVSS), and Ser-119. Gly-79 is a binding site for anthranilate. Residue Ser-91 coordinates Mg(2+). Anthranilate is bound at residue Asn-110. Arg-165 is a binding site for anthranilate. Asp-223 and Glu-224 together coordinate Mg(2+).

The protein belongs to the anthranilate phosphoribosyltransferase family. In terms of assembly, homodimer. Mg(2+) serves as cofactor.

The enzyme catalyses N-(5-phospho-beta-D-ribosyl)anthranilate + diphosphate = 5-phospho-alpha-D-ribose 1-diphosphate + anthranilate. It functions in the pathway amino-acid biosynthesis; L-tryptophan biosynthesis; L-tryptophan from chorismate: step 2/5. Its function is as follows. Catalyzes the transfer of the phosphoribosyl group of 5-phosphorylribose-1-pyrophosphate (PRPP) to anthranilate to yield N-(5'-phosphoribosyl)-anthranilate (PRA). This Vibrio vulnificus (strain CMCP6) protein is Anthranilate phosphoribosyltransferase.